Reading from the N-terminus, the 543-residue chain is Chaperonin GroEL (543 aa).

Residues Thr29–Pro32, Asp86–Thr90, Gly413, Asp478–Leu480, and Asp494 contribute to the ATP site. The disordered stretch occupies residues Pro524–Tyr543.

It belongs to the chaperonin (HSP60) family. As to quaternary structure, forms a cylinder of 14 subunits composed of two heptameric rings stacked back-to-back. Interacts with the co-chaperonin GroES.

The protein localises to the cytoplasm. It carries out the reaction ATP + H2O + a folded polypeptide = ADP + phosphate + an unfolded polypeptide.. Together with its co-chaperonin GroES, plays an essential role in assisting protein folding. The GroEL-GroES system forms a nano-cage that allows encapsulation of the non-native substrate proteins and provides a physical environment optimized to promote and accelerate protein folding. The chain is Chaperonin GroEL from Ruminiclostridium cellulolyticum (strain ATCC 35319 / DSM 5812 / JCM 6584 / H10) (Clostridium cellulolyticum).